Consider the following 292-residue polypeptide: Pantothenate synthetase (292 aa).

Met30–His37 lines the ATP pocket. The active-site Proton donor is the His37. Gln61 is a binding site for (R)-pantoate. Residue Gln61 participates in beta-alanine binding. Gly147 to Asp150 is an ATP binding site. Gln153 is a (R)-pantoate binding site. Residues Val176 and Cys184 to Arg187 each bind ATP.

It belongs to the pantothenate synthetase family. In terms of assembly, homodimer.

Its subcellular location is the cytoplasm. The enzyme catalyses (R)-pantoate + beta-alanine + ATP = (R)-pantothenate + AMP + diphosphate + H(+). It functions in the pathway cofactor biosynthesis; (R)-pantothenate biosynthesis; (R)-pantothenate from (R)-pantoate and beta-alanine: step 1/1. Its function is as follows. Catalyzes the condensation of pantoate with beta-alanine in an ATP-dependent reaction via a pantoyl-adenylate intermediate. This chain is Pantothenate synthetase, found in Agrobacterium fabrum (strain C58 / ATCC 33970) (Agrobacterium tumefaciens (strain C58)).